The chain runs to 170 residues: Protein Rex (170 aa).

A compositionally biased stretch (basic residues) spans 1-16 (MPKTRRQRTRRARRNR). 2 disordered regions span residues 1-27 (MPKTRRQRTRRARRNRPPTPWPISQDL) and 69-170 (VQST…GEKP). Residues 2-19 (PKTRRQRTRRARRNRPPT) carry the Nuclear localization signal, and RNA-binding (RxRE) motif. A homomultimerization region spans residues 57-71 (PPAYIDMPSWPPVQS). Residues 82 to 95 (ALSALLSNTLSLAS) are compositionally biased toward low complexity. Residues 83–94 (LSALLSNTLSLA) carry the Nuclear export signal motif. A homomultimerization region spans residues 124–132 (PSFNQCEST). Low complexity predominate over residues 143-160 (PSGISSPPSPSPNLASVP). Phosphoserine; by host is present on residues serine 151 and serine 153. Positions 161–170 (KTSTPPGEKP) are enriched in polar residues.

Belongs to the deltaretrovirus Rex protein family. Homomultimer. Phosphorylation is essential for RNA-binding and function.

It is found in the host nucleus. Its subcellular location is the host nucleolus. It localises to the host cytoplasm. Rex escorts unspliced gag-pro-pol and singly spliced env mRNAs out of the nucleus of infected cells. These mRNAs carry a recognition sequence called Rex responsive element (RxRE or XRE) located at the 3' region of the long terminal repeat (LTR). This function is essential since most HTLV proteins are translated from unspliced or partially spliced pre-mRNAs that cannot exit the nucleus by the pathway used by fully processed cellular mRNAs. The sequence is that of Protein Rex from Human T-cell leukemia virus 2 (HTLV-2).